We begin with the raw amino-acid sequence, 501 residues long: Probable malate:quinone oxidoreductase (501 aa).

It belongs to the MQO family. Requires FAD as cofactor.

The enzyme catalyses (S)-malate + a quinone = a quinol + oxaloacetate. Its pathway is carbohydrate metabolism; tricarboxylic acid cycle; oxaloacetate from (S)-malate (quinone route): step 1/1. This chain is Probable malate:quinone oxidoreductase, found in Geobacillus kaustophilus (strain HTA426).